Here is a 281-residue protein sequence, read N- to C-terminus: DSC E3 ubiquitin ligase complex subunit 4 (281 aa).

Transmembrane regions (helical) follow at residues 22-42, 62-82, 84-104, and 115-135; these read LCYA…LLLL, LPLF…RMFF, LPTA…INFI, and FITS…ILIA. Positions 145–154 are enriched in polar residues; it reads HIQASQSGLS. 2 disordered regions span residues 145 to 183 and 256 to 281; these read HIQA…EDLQ and NTNS…TNPI. The span at 157-167 shows a compositional bias: acidic residues; the sequence is DGDEEPSDLIT. A compositionally biased stretch (basic and acidic residues) spans 168–183; that stretch reads EDSRDTQQGQRQEDLQ.

Component of the DSC E3 ubiquitin ligase complex composed of dsc1, dsc2, dsc3 and dsc4.

The protein localises to the endoplasmic reticulum membrane. Its subcellular location is the golgi apparatus membrane. It participates in protein modification; protein ubiquitination. In terms of biological role, component of the DSC E3 ubiquitin ligase complex which is required for the sre1 transcriptional activator proteolytic cleavage to release the soluble transcription factor from the membrane in low oxygen or sterol conditions. The complex also plays an important role in the multivesicular body (MVB) pathway and functions in a post-endoplasmic reticulum pathway for protein degradation. This is DSC E3 ubiquitin ligase complex subunit 4 (dsc4) from Schizosaccharomyces pombe (strain 972 / ATCC 24843) (Fission yeast).